Consider the following 440-residue polypeptide: Elongation factor 1-alpha (440 aa).

Positions 5–228 (KPHINLVVIG…ALDTYIQPPK (224 aa)) constitute a tr-type G domain. The segment at 14-21 (GHVDHGKS) is G1. Position 14–21 (14–21 (GHVDHGKS)) interacts with GTP. Serine 21 is a binding site for Mg(2+). Residues 70 to 74 (GVTID) form a G2 region. The interval 91–94 (DAPG) is G3. GTP contacts are provided by residues 91–95 (DAPGH) and 153–156 (NKMD). The tract at residues 153-156 (NKMD) is G4. Positions 194–196 (SAW) are G5.

Belongs to the TRAFAC class translation factor GTPase superfamily. Classic translation factor GTPase family. EF-Tu/EF-1A subfamily.

It localises to the cytoplasm. The enzyme catalyses GTP + H2O = GDP + phosphate + H(+). In terms of biological role, GTP hydrolase that promotes the GTP-dependent binding of aminoacyl-tRNA to the A-site of ribosomes during protein biosynthesis. This chain is Elongation factor 1-alpha, found in Hyperthermus butylicus (strain DSM 5456 / JCM 9403 / PLM1-5).